The sequence spans 110 residues: RNA polymerase II transcriptional coactivator (110 aa).

The interval Met1–Thr50 is disordered. Residues Pro17–Gly42 are compositionally biased toward basic and acidic residues.

The protein belongs to the transcriptional coactivator PC4 family.

It localises to the nucleus. Functionally, general coactivator that functions cooperatively with TAFs and mediates functional interactions between upstream activators and the general transcriptional machinery. Binds single-stranded DNA. Binds specifically to the NssBF element, a short nucleotide sequence of the 1731 retrotransposon, to repress promoter activity. This Drosophila melanogaster (Fruit fly) protein is RNA polymerase II transcriptional coactivator (Ssb-c31a).